The sequence spans 242 residues: Alpha-aspartyl dipeptidase (242 aa).

Active-site charge relay system residues include S125, D140, and H162.

This sequence belongs to the peptidase S51 family.

Its subcellular location is the cytoplasm. The catalysed reaction is Dipeptidase E catalyzes the hydrolysis of dipeptides Asp-|-Xaa. It does not act on peptides with N-terminal Glu, Asn or Gln, nor does it cleave isoaspartyl peptides.. Its function is as follows. Hydrolyzes dipeptides containing N-terminal aspartate residues. The chain is Alpha-aspartyl dipeptidase (aad-a) from Xenopus laevis (African clawed frog).